We begin with the raw amino-acid sequence, 1108 residues long: Receptor-type guanylate cyclase gcy-20 (1108 aa).

Residues 1 to 15 (MRILLLLLQNILVFC) form the signal peptide. The Extracellular portion of the chain corresponds to 16-474 (QFLQTIKVGL…ECPADFVKEY (459 aa)). 6 N-linked (GlcNAc...) asparagine glycosylation sites follow: Asn66, Asn131, Asn319, Asn341, Asn366, and Asn380. The chain crosses the membrane as a helical span at residues 475–495 (LVYTIIAAFIVILALLAGCAG). Positions 483–803 (FIVILALLAG…IEQVRSHLNG (321 aa)) constitute a Protein kinase domain. ATP is bound by residues 489 to 497 (LLAGCAGLL) and Lys571. Over 496-1108 (LLYTMHMKRK…QAGDNNSETV (613 aa)) the chain is Cytoplasmic. The Guanylate cyclase domain maps to 876 to 1006 (TIFFSDVVQF…DAVNTASRME (131 aa)). Residues 1083 to 1108 (LEKNAEGSETSSLSVDQAGDNNSETV) are disordered. Residues 1089-1108 (GSETSSLSVDQAGDNNSETV) are compositionally biased toward polar residues.

It belongs to the adenylyl cyclase class-4/guanylyl cyclase family. As to expression, expressed asymmetrically in ASE left (ASEL) sensory neuron. Expressed in excretory gland and canal cell.

It is found in the cell membrane. It carries out the reaction GTP = 3',5'-cyclic GMP + diphosphate. In terms of biological role, guanylate cyclase involved in the production of the second messenger cGMP. In Caenorhabditis elegans, this protein is Receptor-type guanylate cyclase gcy-20.